The following is a 307-amino-acid chain: NADH-ubiquinone oxidoreductase chain 2 (307 aa).

A run of 10 helical transmembrane segments spans residues 1 to 21 (MTLQSVLLGAMIILGPILSMT), 25 to 45 (WIIIWIGLEISLLGFVSYYML), 58 to 78 (YFLIQSVSSTVMLLNGLYIFV), 88 to 108 (FIFITMLMLKIGMFPLHFWII), 119 to 139 (IGIVGLLLKIVPMWILMHMGC), 144 to 164 (MLNLITMLSVTSMLFGALIGM), 193 to 213 (LFKYFITYGFSLVILLVFLYL), 217 to 237 (MSISLSLLSLSGLPPFMLFIG), 250 to 270 (LWFIVLVFAILSAVISLVYYL), and 287 to 307 (HYKMAMFLLVNVTFGMLLFLT).

The protein belongs to the complex I subunit 2 family.

The protein localises to the mitochondrion inner membrane. The catalysed reaction is a ubiquinone + NADH + 5 H(+)(in) = a ubiquinol + NAD(+) + 4 H(+)(out). Functionally, core subunit of the mitochondrial membrane respiratory chain NADH dehydrogenase (Complex I) that is believed to belong to the minimal assembly required for catalysis. Complex I functions in the transfer of electrons from NADH to the respiratory chain. The immediate electron acceptor for the enzyme is believed to be ubiquinone. The chain is NADH-ubiquinone oxidoreductase chain 2 (ND2) from Albinaria caerulea (Land snail).